We begin with the raw amino-acid sequence, 394 residues long: Elongation factor Tu (394 aa).

In terms of domain architecture, tr-type G spans 10–204; it reads KPHINVGTIG…ALDKYIPEPQ (195 aa). The G1 stretch occupies residues 19–26; that stretch reads GHVDHGKT. 19–26 provides a ligand contact to GTP; it reads GHVDHGKT. Thr-26 contributes to the Mg(2+) binding site. The G2 stretch occupies residues 60-64; it reads GITIN. The G3 stretch occupies residues 81–84; it reads DCPG. GTP-binding positions include 81–85 and 136–139; these read DCPGH and NKCD. A G4 region spans residues 136–139; it reads NKCD. Positions 174–176 are G5; it reads SAL.

The protein belongs to the TRAFAC class translation factor GTPase superfamily. Classic translation factor GTPase family. EF-Tu/EF-1A subfamily. Monomer.

It localises to the cytoplasm. It carries out the reaction GTP + H2O = GDP + phosphate + H(+). GTP hydrolase that promotes the GTP-dependent binding of aminoacyl-tRNA to the A-site of ribosomes during protein biosynthesis. In Hamiltonella defensa subsp. Acyrthosiphon pisum (strain 5AT), this protein is Elongation factor Tu.